The primary structure comprises 107 residues: Nucleoid-associated protein Msil_0275 (107 aa).

The protein belongs to the YbaB/EbfC family. In terms of assembly, homodimer.

It localises to the cytoplasm. The protein resides in the nucleoid. Functionally, binds to DNA and alters its conformation. May be involved in regulation of gene expression, nucleoid organization and DNA protection. This is Nucleoid-associated protein Msil_0275 from Methylocella silvestris (strain DSM 15510 / CIP 108128 / LMG 27833 / NCIMB 13906 / BL2).